Consider the following 304-residue polypeptide: Caspase-6 (304 aa).

Positions 1–29 are disordered; that stretch reads MSGAERRPAAGRVQLDSKPTPTTTADGNQ. The propeptide occupies 1–35; the sequence is MSGAERRPAAGRVQLDSKPTPTTTADGNQNITEVD. The segment covering 17–29 has biased composition (polar residues); sequence SKPTPTTTADGNQ. Positions 54-56 are tri-arginine exosite; it reads QRR. Histidine 133 is an active-site residue. Residues 137–154 are 130's region; the sequence is DHVYAYDAQIKIETITNM. Cysteine 175 is an active-site residue. Residues 192-204 constitute a propeptide that is removed on maturation; that stretch reads SKDETTVNQTEVD.

It belongs to the peptidase C14A family. In terms of assembly, heterotetramer that consists of two anti-parallel arranged heterodimers, each one formed by a 18 kDa (p18) and a 11 kDa (p11) subunit. As to quaternary structure, heterotetramer that consists of two anti-parallel arranged heterodimers, each one formed by a 18 kDa (Caspase-6 subunit p18) and a 11 kDa (Caspase-6 subunit p11) subunit. Widely expressed.

It localises to the cytoplasm. The protein resides in the nucleus. The enzyme catalyses Strict requirement for Asp at position P1 and has a preferred cleavage sequence of Val-Glu-His-Asp-|-.. With respect to regulation, during activation, the N-terminal prodomain is removed by cleavage. Concomitantly, double cleavage gives rise to a large 18-kDa and a small 11-kDa subunit. The two large and two small subunits then assemble to form the active CASP6 complex. Intramolecular cleavage at Asp-191 is a prerequisite for CASP6 self-activation. Cysteine protease that plays essential roles in programmed cell death, development and innate immunity. Acts as a non-canonical executioner caspase during apoptosis: localizes in the nucleus and cleaves the nuclear structural protein lamin-A/LMNA thereby inducing nuclear shrinkage and fragmentation. Lamin-A/LMNA cleavage is required for chromatin condensation and nuclear disassembly during apoptotic execution. Plays an essential role in defense against viruses by acting as a central mediator of the ZBP1-mediated pyroptosis, apoptosis, and necroptosis (PANoptosis), independently of its cysteine protease activity. PANoptosis is a unique inflammatory programmed cell death, which provides a molecular scaffold that allows the interactions and activation of machinery required for inflammasome/pyroptosis, apoptosis and necroptosis. The chain is Caspase-6 from Gallus gallus (Chicken).